The sequence spans 181 residues: ATP synthase subunit delta (181 aa).

It belongs to the ATPase delta chain family. As to quaternary structure, F-type ATPases have 2 components, F(1) - the catalytic core - and F(0) - the membrane proton channel. F(1) has five subunits: alpha(3), beta(3), gamma(1), delta(1), epsilon(1). F(0) has three main subunits: a(1), b(2) and c(10-14). The alpha and beta chains form an alternating ring which encloses part of the gamma chain. F(1) is attached to F(0) by a central stalk formed by the gamma and epsilon chains, while a peripheral stalk is formed by the delta and b chains.

The protein localises to the cell membrane. In terms of biological role, f(1)F(0) ATP synthase produces ATP from ADP in the presence of a proton or sodium gradient. F-type ATPases consist of two structural domains, F(1) containing the extramembraneous catalytic core and F(0) containing the membrane proton channel, linked together by a central stalk and a peripheral stalk. During catalysis, ATP synthesis in the catalytic domain of F(1) is coupled via a rotary mechanism of the central stalk subunits to proton translocation. Functionally, this protein is part of the stalk that links CF(0) to CF(1). It either transmits conformational changes from CF(0) to CF(1) or is implicated in proton conduction. The sequence is that of ATP synthase subunit delta from Mycoplasmoides gallisepticum (strain R(low / passage 15 / clone 2)) (Mycoplasma gallisepticum).